Reading from the N-terminus, the 61-residue chain is MRGLPVFVILLLLIASEPSVDARPKTKADVPLTSLNDNAKRTLQILRNKRACCPYEPSCCI.

The signal sequence occupies residues 1-22 (MRGLPVFVILLLLIASEPSVDA). A propeptide spanning residues 23–48 (RPKTKADVPLTSLNDNAKRTLQILRN) is cleaved from the precursor.

Belongs to the conotoxin T superfamily. In terms of processing, contains 2 disulfide bonds that can be either 'C1-C3, C2-C4' or 'C1-C4, C2-C3', since these disulfide connectivities have been observed for conotoxins with cysteine framework V (for examples, see AC P0DQQ7 and AC P81755). Expressed by the venom duct.

The protein resides in the secreted. The sequence is that of Conotoxin Bt5.1 from Conus betulinus (Beech cone).